The chain runs to 158 residues: NAD(P)H-quinone oxidoreductase subunit N (158 aa).

This sequence belongs to the complex I NdhN subunit family. In terms of assembly, NDH-1 can be composed of about 15 different subunits; different subcomplexes with different compositions have been identified which probably have different functions.

The protein localises to the cellular thylakoid membrane. The catalysed reaction is a plastoquinone + NADH + (n+1) H(+)(in) = a plastoquinol + NAD(+) + n H(+)(out). The enzyme catalyses a plastoquinone + NADPH + (n+1) H(+)(in) = a plastoquinol + NADP(+) + n H(+)(out). Functionally, NDH-1 shuttles electrons from an unknown electron donor, via FMN and iron-sulfur (Fe-S) centers, to quinones in the respiratory and/or the photosynthetic chain. The immediate electron acceptor for the enzyme in this species is believed to be plastoquinone. Couples the redox reaction to proton translocation, and thus conserves the redox energy in a proton gradient. Cyanobacterial NDH-1 also plays a role in inorganic carbon-concentration. In Prochlorococcus marinus (strain AS9601), this protein is NAD(P)H-quinone oxidoreductase subunit N.